We begin with the raw amino-acid sequence, 156 residues long: Ribosomal RNA large subunit methyltransferase H (156 aa).

Residues L73, G104, and 123 to 128 (LSPLTL) contribute to the S-adenosyl-L-methionine site.

This sequence belongs to the RNA methyltransferase RlmH family. As to quaternary structure, homodimer.

The protein localises to the cytoplasm. The enzyme catalyses pseudouridine(1915) in 23S rRNA + S-adenosyl-L-methionine = N(3)-methylpseudouridine(1915) in 23S rRNA + S-adenosyl-L-homocysteine + H(+). Functionally, specifically methylates the pseudouridine at position 1915 (m3Psi1915) in 23S rRNA. The polypeptide is Ribosomal RNA large subunit methyltransferase H (Serratia proteamaculans (strain 568)).